The sequence spans 123 residues: Large ribosomal subunit protein uL14c (123 aa).

Belongs to the universal ribosomal protein uL14 family. As to quaternary structure, part of the 50S ribosomal subunit. Interacts with IOJAP.

It localises to the plastid. Its subcellular location is the chloroplast. Binds to 23S rRNA. This is Large ribosomal subunit protein uL14c from Zea mays (Maize).